We begin with the raw amino-acid sequence, 462 residues long: Cysteine--tRNA ligase (462 aa).

Cys30 contributes to the Zn(2+) binding site. A 'HIGH' region motif is present at residues 32-42 (MTVYDYCHVGH). Residues Cys214, His239, and Glu243 each coordinate Zn(2+). The 'KMSKS' region motif lies at 271 to 275 (KMSKS). An ATP-binding site is contributed by Lys274.

This sequence belongs to the class-I aminoacyl-tRNA synthetase family. Monomer. Zn(2+) is required as a cofactor.

It localises to the cytoplasm. It carries out the reaction tRNA(Cys) + L-cysteine + ATP = L-cysteinyl-tRNA(Cys) + AMP + diphosphate. The protein is Cysteine--tRNA ligase of Cupriavidus necator (strain ATCC 17699 / DSM 428 / KCTC 22496 / NCIMB 10442 / H16 / Stanier 337) (Ralstonia eutropha).